A 629-amino-acid chain; its full sequence is tRNA uridine 5-carboxymethylaminomethyl modification enzyme MnmG (629 aa).

Residues 13 to 18 (GGGHAG), V125, and S180 each bind FAD. 273 to 287 (GPRYCPSIEDKVMRF) provides a ligand contact to NAD(+). Q370 is a binding site for FAD.

Belongs to the MnmG family. In terms of assembly, homodimer. Heterotetramer of two MnmE and two MnmG subunits. The cofactor is FAD.

Its subcellular location is the cytoplasm. Functionally, NAD-binding protein involved in the addition of a carboxymethylaminomethyl (cmnm) group at the wobble position (U34) of certain tRNAs, forming tRNA-cmnm(5)s(2)U34. The sequence is that of tRNA uridine 5-carboxymethylaminomethyl modification enzyme MnmG from Pasteurella multocida (strain Pm70).